We begin with the raw amino-acid sequence, 428 residues long: Serine--tRNA ligase (428 aa).

233–235 (TAE) lines the L-serine pocket. 264–266 (RRE) is a binding site for ATP. Glutamate 287 contacts L-serine. 351-354 (EVSS) is an ATP binding site. Serine 387 provides a ligand contact to L-serine.

The protein belongs to the class-II aminoacyl-tRNA synthetase family. Type-1 seryl-tRNA synthetase subfamily. As to quaternary structure, homodimer. The tRNA molecule binds across the dimer.

The protein resides in the cytoplasm. It catalyses the reaction tRNA(Ser) + L-serine + ATP = L-seryl-tRNA(Ser) + AMP + diphosphate + H(+). The enzyme catalyses tRNA(Sec) + L-serine + ATP = L-seryl-tRNA(Sec) + AMP + diphosphate + H(+). The protein operates within aminoacyl-tRNA biosynthesis; selenocysteinyl-tRNA(Sec) biosynthesis; L-seryl-tRNA(Sec) from L-serine and tRNA(Sec): step 1/1. In terms of biological role, catalyzes the attachment of serine to tRNA(Ser). Is also able to aminoacylate tRNA(Sec) with serine, to form the misacylated tRNA L-seryl-tRNA(Sec), which will be further converted into selenocysteinyl-tRNA(Sec). In Salinibacter ruber (strain DSM 13855 / M31), this protein is Serine--tRNA ligase.